Consider the following 232-residue polypeptide: Acyl-protein thioesterase 1 (232 aa).

Residues S125, D179, and H212 each act as charge relay system in the active site.

This sequence belongs to the AB hydrolase superfamily. AB hydrolase 2 family.

It localises to the cytoplasm. The protein resides in the nucleus. The catalysed reaction is S-hexadecanoyl-L-cysteinyl-[protein] + H2O = L-cysteinyl-[protein] + hexadecanoate + H(+). Hydrolyzes fatty acids from S-acylated cysteine residues in proteins with a strong preference for palmitoylated G-alpha proteins over other acyl substrates. Mediates the deacylation of G-alpha proteins such as GPA1 in vivo, but has weak or no activity toward palmitoylated Ras proteins. Has weak lysophospholipase activity in vitro; however such activity may not exist in vivo. The sequence is that of Acyl-protein thioesterase 1 from Debaryomyces hansenii (strain ATCC 36239 / CBS 767 / BCRC 21394 / JCM 1990 / NBRC 0083 / IGC 2968) (Yeast).